The following is a 718-amino-acid chain: Scarecrow-like protein 9 (718 aa).

The interval 305–338 (VEKKKASDAQGGKRRARGRGRGRGRGGGGGQNGK) is disordered. Residues 316–328 (GKRRARGRGRGRG) are compositionally biased toward basic residues. The GRAS domain occupies 335 to 713 (QNGKKEVVDL…RTVMALSVWK (379 aa)). Residues 342–402 (VDLRSLLIHC…EARLAGTGSQ (61 aa)) form a leucine repeat I (LRI) region. Positions 421–484 (HQLFLACCPF…YGSPKVRITG (64 aa)) are VHIID. The VHIID motif lies at 452–456 (VHVID). A leucine repeat II (LRII) region spans residues 500–532 (ETGQRLAAYAKLFGVPFEYKAIAKKWDAIQLED). A PFYRE region spans residues 541–635 (TVVNCLYRAE…MEVFGREALN (95 aa)). The tract at residues 638 to 713 (ACEGWERVER…RTVMALSVWK (76 aa)) is SAW.

This sequence belongs to the GRAS family. Expressed in cotyledons, leaves and flowers, and in the elongation zone in root.

It is found in the nucleus. Functionally, probable transcription factor involved in plant development. In Arabidopsis thaliana (Mouse-ear cress), this protein is Scarecrow-like protein 9 (SCL9).